We begin with the raw amino-acid sequence, 360 residues long: Decorin (360 aa).

A signal peptide spans 1–16 (MTATLILLLLAQVSWA). Residues 17–30 (GPFQQRGLFDFMLE) constitute a propeptide that is removed on maturation. Ser-34 is a glycosylation site (O-linked (Xyl...) (glycosaminoglycan) serine). Cystine bridges form between Cys-55/Cys-61 and Cys-59/Cys-68. LRR repeat units follow at residues 74–94 (DKVPKDLPPDTTLLDLQNNKI), 95–118 (TEIKDGDFKNLKNLHALILVNNKI), 119–142 (SKISPGAFTPLVKLERLYLSKNHL), 143–163 (KELPEKMPKSLQELRAHENEI), 164–187 (TKVRKSVFSGMNQMIVIELGTNPL), 188–213 (KSSGIENGAFQGMKKLSYIRIADTNI), 214–234 (TTIPQGLPPSLTELHLDGNKI), 235–258 (TKIDASSLKGLNNLAKLGLSFNDI), 259–282 (SAVDNGSLANAPHLRELHLDNNKL), 283–305 (IRVPGGLADHKYIQVVYLHNNNI), 306–335 (SVVGANDFCPPGYNTKKASYSGVSLFSNPV), and 336–360 (QYWEIQPSTFRCVYMRSAIQLGNYK). A glycan (N-linked (GlcNAc...) asparagine) is linked at Asn-212. Asn-263 and Asn-304 each carry an N-linked (GlcNAc...) asparagine glycan. Residues Cys-314 and Cys-347 are joined by a disulfide bond.

The protein belongs to the small leucine-rich proteoglycan (SLRP) family. SLRP class I subfamily. As to quaternary structure, binds to type I and type II collagen, fibronectin and TGF-beta. Forms a ternary complex with MFAP2 and ELN. Interacts with DPT. In terms of processing, the attached glycosaminoglycan chain can be either chondroitin sulfate or dermatan sulfate depending upon the tissue of origin.

It localises to the secreted. The protein localises to the extracellular space. Its subcellular location is the extracellular matrix. Functionally, may affect the rate of fibrils formation. The polypeptide is Decorin (DCN) (Oryctolagus cuniculus (Rabbit)).